Reading from the N-terminus, the 354-residue chain is C-C chemokine receptor type 5 (354 aa).

The Extracellular segment spans residues 1 to 32; that stretch reads MDFQGSIPTYIYDIDYSMSAPCQKVNVKQIAA. O-linked (GalNAc...) serine glycosylation is present at Ser6. Tyr10 and Tyr16 each carry sulfotyrosine. 2 cysteine pairs are disulfide-bonded: Cys22-Cys271 and Cys103-Cys180. Residues 33–60 traverse the membrane as a helical segment; the sequence is QLLPPLYSLVFIFGFVGNMMVFLILISC. The Cytoplasmic portion of the chain corresponds to 61–70; sequence KKLKSMTDIY. A helical transmembrane segment spans residues 71–91; that stretch reads LFNLAISDLLFLLTLPFWAHY. Over 92-104 the chain is Extracellular; sequence AANEWVFGNIMCK. A helical membrane pass occupies residues 105 to 126; that stretch reads LFTGIYHIGYFGGIFFIILLTI. The Cytoplasmic portion of the chain corresponds to 127-143; the sequence is DRYLAIVHAVFAIKART. Residues 144–168 form a helical membrane-spanning segment; that stretch reads VNFGVITSVVTWVVAVFVSLPEIIF. Residues 169–200 lie on the Extracellular side of the membrane; sequence MRSQKEGSHYTCSPHFLHIQYRFWKHFQTLKM. A helical transmembrane segment spans residues 201–220; that stretch reads VILSLILPLLVMVICYSGIL. Topologically, residues 221–237 are cytoplasmic; sequence NTLFRCRNEKKRHRAVR. A helical membrane pass occupies residues 238–262; the sequence is LIFAIMIVYFLFWTPYNIVLLLTTF. At 263–279 the chain is on the extracellular side; sequence QEYFGLNNCSSSNRLDQ. Residues 280–303 traverse the membrane as a helical segment; the sequence is AMQVTETLGMTHCCLNPVIYAFVG. The Cytoplasmic portion of the chain corresponds to 304-354; the sequence is EKFRNYLSVFFRKHIVKRFCKHCSIFQQVNPDRVSSVYTRSTGEQEVSTGL. S-palmitoyl cysteine attachment occurs at residues Cys323 and Cys326. Phosphoserine; by BARK1 is present on residues Ser338, Ser339, Ser344, and Ser351.

The protein belongs to the G-protein coupled receptor 1 family. As to quaternary structure, interacts with PRAF2. Efficient ligand binding to CCL3/MIP-1alpha and CCL4/MIP-1beta requires sulfation, O-glycosylation and sialic acid modifications. Glycosylation on Ser-6 is required for efficient binding of CCL4. Interacts with GRK2. Interacts with ARRB1 and ARRB2. Interacts with CNIH4. Interacts with S100A4; this interaction stimulates T-lymphocyte chemotaxis. In terms of processing, sulfated on at least 2 of the N-terminal tyrosines. Sulfation is required for efficient binding of the chemokines, CCL3 and CCL4. O-glycosylated, but not N-glycosylated. Ser-6 appears to be the major site. Also sialylated glycans present which contribute to chemokine binding. Ser-17 may also be glycosylated and, if so, with small moieties such as a T-antigen. Post-translationally, palmitoylation in the C-terminal is important for cell surface expression. In terms of processing, phosphorylation on serine residues in the C-terminal is stimulated by binding CC chemokines especially by APO-RANTES.

The protein resides in the cell membrane. Receptor for a number of inflammatory CC-chemokines including CCL3/MIP-1-alpha, CCL4/MIP-1-beta and RANTES and subsequently transduces a signal by increasing the intracellular calcium ion level. May play a role in the control of granulocytic lineage proliferation or differentiation. Participates in T-lymphocyte migration to the infection site by acting as a chemotactic receptor. The polypeptide is C-C chemokine receptor type 5 (Ccr5) (Rattus norvegicus (Rat)).